The primary structure comprises 202 residues: Imidazoleglycerol-phosphate dehydratase (202 aa).

This sequence belongs to the imidazoleglycerol-phosphate dehydratase family.

Its subcellular location is the cytoplasm. It carries out the reaction D-erythro-1-(imidazol-4-yl)glycerol 3-phosphate = 3-(imidazol-4-yl)-2-oxopropyl phosphate + H2O. It participates in amino-acid biosynthesis; L-histidine biosynthesis; L-histidine from 5-phospho-alpha-D-ribose 1-diphosphate: step 6/9. This Rhizobium leguminosarum bv. trifolii (strain WSM2304) protein is Imidazoleglycerol-phosphate dehydratase.